The following is a 690-amino-acid chain: Elongation factor G (690 aa).

One can recognise a tr-type G domain in the interval 8–283 (EKYRNIGIMA…AVVDYLPSPL (276 aa)). Residues 17 to 24 (AHIDAGKT), 81 to 85 (DTPGH), and 135 to 138 (NKLD) contribute to the GTP site.

It belongs to the TRAFAC class translation factor GTPase superfamily. Classic translation factor GTPase family. EF-G/EF-2 subfamily.

The protein localises to the cytoplasm. Catalyzes the GTP-dependent ribosomal translocation step during translation elongation. During this step, the ribosome changes from the pre-translocational (PRE) to the post-translocational (POST) state as the newly formed A-site-bound peptidyl-tRNA and P-site-bound deacylated tRNA move to the P and E sites, respectively. Catalyzes the coordinated movement of the two tRNA molecules, the mRNA and conformational changes in the ribosome. The sequence is that of Elongation factor G from Rhizorhabdus wittichii (strain DSM 6014 / CCUG 31198 / JCM 15750 / NBRC 105917 / EY 4224 / RW1) (Sphingomonas wittichii).